The following is a 612-amino-acid chain: Apoptosis-inducing factor 1, mitochondrial (612 aa).

2 short sequence motifs (mitochondrial localization signal) span residues 1-30 (MFRC…PKQR) and 62-88 (KMDN…KTIK). The transit peptide at 1–54 (MFRCGGLAGAFKQKLVPLVRTVYVQRPKQRNRLPGNLFQQWRVPLELQMARQMA) directs the protein to the mitochondrion. Positions 55-101 (SSGSSGGKMDNSVLVLIVGLSTIGAGAYAYKTIKEDQKRYNERVMGL) are cleaved as a propeptide — removed in mature form. The residue at position 108 (K108) is an N6-succinyllysine. S115 is modified (phosphoserine). The FAD-dependent oxidoreductase stretch occupies residues 133–482 (FLLIGGGTAA…KPYWHQSMFW (350 aa)). Residues 137 to 141 (GGGTA), 163 to 164 (ED), R171, and K176 contribute to the FAD site. W195 is an NAD(+) binding site. An FAD-binding site is contributed by V232. A Glycyl lysine isopeptide (Lys-Gly) (interchain with G-Cter in ubiquitin) cross-link involves residue K254. S267 is modified (phosphoserine). An FAD-binding site is contributed by R284. NAD(+)-binding positions include 307–310 (GGFL), E335, and K341. S370 carries the post-translational modification Phosphoserine. An N6-acetyllysine modification is found at K387. An NAD(+)-binding site is contributed by G398. D437 contacts FAD. Residues 445 to 450 (KLGRRR) carry the Nuclear localization signal motif. NAD(+) is bound by residues 452 to 453 (EH), W482, and E492. FAD-binding positions include 453 to 454 (HH) and W482. Over residues 512–528 (AQDNPKSATEQSGTGIR) the composition is skewed to polar residues. Residues 512–551 (AQDNPKSATEQSGTGIRSESETESEASEITIPPSAPAVPQ) form a disordered region. A Phosphothreonine modification is found at T520. Residues S523 and S529 each carry the phosphoserine modification. Position 582 (N582) interacts with NAD(+). K592 carries the post-translational modification N6-acetyllysine.

This sequence belongs to the FAD-dependent oxidoreductase family. As to quaternary structure, monomer (oxidized form). Homodimer (reduced form). Upon reduction with NADH, undergoes dimerization and forms tight, long-lived FADH2-NAD charge transfer complexes (CTC) resistant to oxidation. Also dimerizes with isoform 3 preventing its release from mitochondria. Interacts with XIAP/BIRC4. Interacts (via N-terminus) with EIF3G (via C-terminus). Interacts with PRELID1. Interacts with CHCHD4; the interaction increases in presence of NADH. Interacts with processed form of PARP1 (Poly [ADP-ribose] polymerase 1, processed C-terminus); interaction is mediated with poly-ADP-ribose chains attached to PARP1, promoting translocation into the nucleus. The cofactor is FAD. Post-translationally, under normal conditions, a 54-residue N-terminal segment is first proteolytically removed during or just after translocation into the mitochondrial intermembrane space (IMS) by the mitochondrial processing peptidase (MPP) to form the inner-membrane-anchored mature form (AIFmit). During apoptosis, it is further proteolytically processed at amino-acid position 101 leading to the generation of the mature form, which is confined to the mitochondrial IMS in a soluble form (AIFsol). AIFsol is released to the cytoplasm in response to specific death signals, and translocated to the nucleus, where it induces nuclear apoptosis in a caspase-independent manner. Ubiquitination by XIAP/BIRC4 does not lead to proteasomal degradation. Ubiquitination at Lys-254 by XIAP/BIRC4 blocks its ability to bind DNA and induce chromatin degradation, thereby inhibiting its ability to induce cell death. In terms of tissue distribution, expressed in cortical neurons (at protein level). Expressed in liver (at protein level).

It localises to the mitochondrion intermembrane space. Its subcellular location is the mitochondrion inner membrane. The protein resides in the cytoplasm. The protein localises to the nucleus. It is found in the perinuclear region. It localises to the mitochondrion. Its subcellular location is the cytosol. It catalyses the reaction A + NADH + H(+) = AH2 + NAD(+). Its function is as follows. Functions both as NADH oxidoreductase and as regulator of apoptosis. In response to apoptotic stimuli, it is released from the mitochondrion intermembrane space into the cytosol and to the nucleus, where it functions as a proapoptotic factor in a caspase-independent pathway. Release into the cytoplasm is mediated upon binding to poly-ADP-ribose chains. The soluble form (AIFsol) found in the nucleus induces 'parthanatos' i.e. caspase-independent fragmentation of chromosomal DNA. Binds to DNA in a sequence-independent manner. Interacts with EIF3G, and thereby inhibits the EIF3 machinery and protein synthesis, and activates caspase-7 to amplify apoptosis. Plays a critical role in caspase-independent, pyknotic cell death in hydrogen peroxide-exposed cells. In contrast, participates in normal mitochondrial metabolism. Plays an important role in the regulation of respiratory chain biogenesis by interacting with CHCHD4 and controlling CHCHD4 mitochondrial import. This chain is Apoptosis-inducing factor 1, mitochondrial, found in Mus musculus (Mouse).